A 546-amino-acid polypeptide reads, in one-letter code: Glutamate--tRNA ligase (546 aa).

Positions 41–51 match the 'HIGH' region motif; the sequence is PSPTGFQHIGG. The short motif at 293 to 297 is the 'KMSKS' region element; it reads KLSKR. Residue lysine 296 coordinates ATP.

Belongs to the class-I aminoacyl-tRNA synthetase family. Glutamate--tRNA ligase type 1 subfamily. In terms of assembly, monomer.

The protein resides in the cytoplasm. The catalysed reaction is tRNA(Glu) + L-glutamate + ATP = L-glutamyl-tRNA(Glu) + AMP + diphosphate. Its function is as follows. Catalyzes the attachment of glutamate to tRNA(Glu) in a two-step reaction: glutamate is first activated by ATP to form Glu-AMP and then transferred to the acceptor end of tRNA(Glu). The chain is Glutamate--tRNA ligase from Clostridium perfringens (strain 13 / Type A).